The sequence spans 340 residues: Putative phosphatidylcholine:ceramide cholinephosphotransferase 3 (340 aa).

Positions 1–25 (MGSVSKTVISARGASPDDEQNGTKN) are disordered. Helical transmembrane passes span 36 to 56 (CIFL…VLAY), 81 to 101 (SSLG…LLVI), 178 to 198 (LLFS…AYYL), and 202 to 222 (IKPL…CMTI). Residue His-183 is part of the active site. Topologically, residues 223 to 340 (SRTHYTIDVV…SSSSTYPLPC (118 aa)) are cytoplasmic. Catalysis depends on residues His-226 and Asp-230. The tract at residues 294-313 (STPRGQERGGASAESSDSSV) is disordered.

The protein belongs to the sphingomyelin synthase family.

The protein resides in the membrane. The catalysed reaction is an N-acyl-sphingoid base + a 1,2-diacyl-sn-glycero-3-phosphocholine = an N-(acyl)-sphingosylphosphocholine + a 1,2-diacyl-sn-glycerol. The enzyme catalyses an N-acylsphing-4-enine + a 1,2-diacyl-sn-glycero-3-phosphocholine = a sphingomyelin + a 1,2-diacyl-sn-glycerol. It catalyses the reaction an N-acyl-15-methylhexadecasphing-4-enine + a 1,2-diacyl-sn-glycero-3-phosphocholine = an N-acyl-15-methylhexadecasphing-4-enine-1-phosphocholine + a 1,2-diacyl-sn-glycerol. It functions in the pathway lipid metabolism; sphingolipid metabolism. Its function is as follows. Bidirectional lipid cholinephosphotransferase capable of converting phosphatidylcholine (PC) and ceramide to sphingomyelin (SM) and diacylglycerol (DAG) and vice versa. Direction is dependent on the relative concentrations of DAG and ceramide as phosphocholine acceptors. Directly and specifically recognizes the choline head group on the substrate. Also requires two fatty chains on the choline-P donor molecule in order to be recognized efficiently as a substrate. Does not function strictly as a SM synthase. C.elegans contains specific sphingoid bases, which are unique or different in structure compared to the sphingoid bases found in other animals. Two examples of these distinctive compounds are: 15-methylhexadecasphinganine and 15-methylhexadecasphing-4-enine. The chain is Putative phosphatidylcholine:ceramide cholinephosphotransferase 3 (sms-3) from Caenorhabditis elegans.